Consider the following 522-residue polypeptide: Cell polarity protein mod5 (522 aa).

5 disordered regions span residues 1–83 (MSAL…PDGD), 119–158 (KRSA…FNSN), 170–192 (RRIL…TKSA), 251–285 (PLQP…SPVP), and 300–516 (YSPS…KLEK). 3 stretches are compositionally biased toward polar residues: residues 27–46 (PNTT…SAPS), 66–76 (LPSSKQDTGSS), and 131–146 (NGST…SPSE). The residue at position 43 (serine 43) is a Phosphoserine. Low complexity predominate over residues 258-285 (PANETPASSSSSAKARPVSVPDMSSPVP). At serine 303 the chain carries Phosphoserine. Positions 308-318 (KVAETDSESRK) are enriched in basic and acidic residues. Residues 335 to 349 (GAQTQSTPNRISRSD) show a composition bias toward polar residues. Serine 350 carries the phosphoserine modification. Composition is skewed to polar residues over residues 363 to 396 (NAST…TSTN) and 404 to 431 (DIPQ…TPQV). The span at 439 to 452 (SRSSPLPSASVPAL) shows a compositional bias: low complexity. Basic and acidic residues-rich tracts occupy residues 472–482 (HESEMPPHVTR) and 495–516 (PKEK…KLEK).

Interacts with tea1 and tea3.

The protein localises to the cell membrane. Functionally, with tea1, acts in a positive-feedback loop in the microtubule-mediated regulation of cell polarity. Involved in the anchoring of tea1 at the cortex as well as the correct localization of tea3. This chain is Cell polarity protein mod5 (mod5), found in Schizosaccharomyces pombe (strain 972 / ATCC 24843) (Fission yeast).